The chain runs to 209 residues: Ribonuclease HII (209 aa).

The RNase H type-2 domain maps to 18 to 209 (GLIAGVDEVG…FKPVKALLEG (192 aa)). Asp-24, Glu-25, and Asp-116 together coordinate a divalent metal cation.

Belongs to the RNase HII family. Mn(2+) serves as cofactor. Requires Mg(2+) as cofactor.

The protein localises to the cytoplasm. The catalysed reaction is Endonucleolytic cleavage to 5'-phosphomonoester.. Endonuclease that specifically degrades the RNA of RNA-DNA hybrids. The sequence is that of Ribonuclease HII from Shewanella putrefaciens (strain CN-32 / ATCC BAA-453).